A 308-amino-acid polypeptide reads, in one-letter code: MATVINNAMLEAILAEIRPLIGRGKVADYIPALASVSGDKLGIAISTVDGQHFAAGDAHERFSIQSISKVLSLVVAMNHYQEEEIWQRVGKDPSGQPFNSLLQLEIEQGKPRNPFINAGALVVCDMLQSRLSAPRQRMLEIVRRLSGVADIAYDPVVARSEFEHSARNAAIAWLMKSFGNFHNDVATVLQNYFHYCSLEMSCVELARTFLFLADRGIAPHLDAPVIAPIQSRQVNALMMTSGMYQNAGEFAWRVGLPAKSGVGGGIVAIVPQEMAIAVWSPELDDAGNSLAGVAMLEKLTQRMGRSVF.

Positions 66, 117, 161, 168, 192, 244, and 262 each coordinate substrate.

It belongs to the glutaminase family. As to quaternary structure, homotetramer.

The enzyme catalyses L-glutamine + H2O = L-glutamate + NH4(+). In Klebsiella pneumoniae subsp. pneumoniae (strain ATCC 700721 / MGH 78578), this protein is Glutaminase.